We begin with the raw amino-acid sequence, 286 residues long: Cysteine-rich repeat secretory protein 57 (286 aa).

The N-terminal stretch at 1–20 is a signal peptide; the sequence is METTKKLSVLLCLFFTMNQA. Topologically, residues 21 to 265 are extracellular; sequence ISESDSDEHM…PSRSGSFSIR (245 aa). Gnk2-homologous domains are found at residues 29–131 and 137–247; these read HMAT…DKFF and TKPN…TSNS. N-linked (GlcNAc...) asparagine glycans are attached at residues asparagine 35, asparagine 40, asparagine 44, asparagine 60, asparagine 69, asparagine 90, asparagine 100, asparagine 108, asparagine 209, and asparagine 246. A helical membrane pass occupies residues 266-284; it reads GNNKILVGMILAVSVFAFL. At 285-286 the chain is on the cytoplasmic side; it reads GL.

The protein belongs to the cysteine-rich repeat secretory protein family.

It is found in the membrane. The protein is Cysteine-rich repeat secretory protein 57 (CRRSP57) of Arabidopsis thaliana (Mouse-ear cress).